Here is a 754-residue protein sequence, read N- to C-terminus: Ribosomal RNA large subunit methyltransferase K/L (754 aa).

Positions 46–157 constitute a THUMP domain; that stretch reads TAYRLCLWSR…RGEAILSLDL (112 aa).

This sequence belongs to the methyltransferase superfamily. RlmKL family.

It is found in the cytoplasm. It catalyses the reaction guanosine(2445) in 23S rRNA + S-adenosyl-L-methionine = N(2)-methylguanosine(2445) in 23S rRNA + S-adenosyl-L-homocysteine + H(+). The catalysed reaction is guanosine(2069) in 23S rRNA + S-adenosyl-L-methionine = N(2)-methylguanosine(2069) in 23S rRNA + S-adenosyl-L-homocysteine + H(+). Specifically methylates the guanine in position 2445 (m2G2445) and the guanine in position 2069 (m7G2069) of 23S rRNA. The sequence is that of Ribosomal RNA large subunit methyltransferase K/L from Pseudomonas fluorescens (strain ATCC BAA-477 / NRRL B-23932 / Pf-5).